Reading from the N-terminus, the 370-residue chain is Chaperone protein DnaJ (370 aa).

In terms of domain architecture, J spans 5–69 (DYYEVLGVDR…QKKAHYDQFG (65 aa)). A CR-type zinc finger spans residues 128 to 210 (GKETTIEIPR…CGGKGKVRKR (83 aa)). Residues C141, C144, C158, C161, C184, C187, C198, and C201 each contribute to the Zn(2+) site. CXXCXGXG motif repeat units lie at residues 141 to 148 (CHTCSGSG), 158 to 165 (CPHCGGSG), 184 to 191 (CHHCEGTG), and 198 to 205 (CATCGGKG).

This sequence belongs to the DnaJ family. Homodimer. It depends on Zn(2+) as a cofactor.

The protein resides in the cytoplasm. Its function is as follows. Participates actively in the response to hyperosmotic and heat shock by preventing the aggregation of stress-denatured proteins and by disaggregating proteins, also in an autonomous, DnaK-independent fashion. Unfolded proteins bind initially to DnaJ; upon interaction with the DnaJ-bound protein, DnaK hydrolyzes its bound ATP, resulting in the formation of a stable complex. GrpE releases ADP from DnaK; ATP binding to DnaK triggers the release of the substrate protein, thus completing the reaction cycle. Several rounds of ATP-dependent interactions between DnaJ, DnaK and GrpE are required for fully efficient folding. Also involved, together with DnaK and GrpE, in the DNA replication of plasmids through activation of initiation proteins. The protein is Chaperone protein DnaJ of Halalkalibacterium halodurans (strain ATCC BAA-125 / DSM 18197 / FERM 7344 / JCM 9153 / C-125) (Bacillus halodurans).